The following is a 249-amino-acid chain: Enolase-phosphatase E1 (249 aa).

Belongs to the HAD-like hydrolase superfamily. MasA/MtnC family. In terms of assembly, monomer. Requires Mg(2+) as cofactor.

It carries out the reaction 5-methylsulfanyl-2,3-dioxopentyl phosphate + H2O = 1,2-dihydroxy-5-(methylsulfanyl)pent-1-en-3-one + phosphate. Its pathway is amino-acid biosynthesis; L-methionine biosynthesis via salvage pathway; L-methionine from S-methyl-5-thio-alpha-D-ribose 1-phosphate: step 3/6. It functions in the pathway amino-acid biosynthesis; L-methionine biosynthesis via salvage pathway; L-methionine from S-methyl-5-thio-alpha-D-ribose 1-phosphate: step 4/6. Its function is as follows. Bifunctional enzyme that catalyzes the enolization of 2,3-diketo-5-methylthiopentyl-1-phosphate (DK-MTP-1-P) into the intermediate 2-hydroxy-3-keto-5-methylthiopentenyl-1-phosphate (HK-MTPenyl-1-P), which is then dephosphorylated to form the acireductone 1,2-dihydroxy-3-keto-5-methylthiopentene (DHK-MTPene). In Pseudomonas aeruginosa (strain ATCC 15692 / DSM 22644 / CIP 104116 / JCM 14847 / LMG 12228 / 1C / PRS 101 / PAO1), this protein is Enolase-phosphatase E1.